Reading from the N-terminus, the 254-residue chain is Probable transcriptional regulator ycf27 (254 aa).

The Response regulatory domain occupies 16–129; sequence KVLIVDDEAS…ELEARIRAVL (114 aa). At Asp-65 the chain carries 4-aspartylphosphate. A DNA-binding region (H-T-H motif) is located at residues 85-103; sequence DVPIIMLTALGDVADRITG. Positions 144–245 form a DNA-binding region, ompR/PhoB-type; the sequence is SGIINFNFLT…ARGTGYLFQR (102 aa).

The protein localises to the plastid. Its subcellular location is the chloroplast. In terms of biological role, probable promoter-specific protein mediating the interaction between DNA and RNA polymerase. In Guillardia theta (Cryptophyte), this protein is Probable transcriptional regulator ycf27 (ycf27).